Consider the following 363-residue polypeptide: Putative type I specificity subunit S.MpnORF507P (363 aa).

Belongs to the type-I restriction system S methylase family. As to quaternary structure, the methyltransferase is composed of M and S polypeptides.

Functionally, the specificity (S) subunit of a type I methyltransferase (MTase); this subunit dictates DNA sequence specificity. The single R subunit has multiple frameshifts and is probably not expressed. The sequence is that of Putative type I specificity subunit S.MpnORF507P from Mycoplasma pneumoniae (strain ATCC 29342 / M129 / Subtype 1) (Mycoplasmoides pneumoniae).